Here is a 358-residue protein sequence, read N- to C-terminus: tRNA-specific 2-thiouridylase MnmA (358 aa).

Residues 6–13 (LVSGGVDS) and Ile-32 contribute to the ATP site. The interaction with target base in tRNA stretch occupies residues 93-95 (NPD). Cys-98 acts as the Nucleophile in catalysis. A disulfide bridge links Cys-98 with Cys-193. Gly-121 is a binding site for ATP. Residues 143–145 (KDQ) form an interaction with tRNA region. The Cysteine persulfide intermediate role is filled by Cys-193.

The protein belongs to the MnmA/TRMU family.

The protein resides in the cytoplasm. It carries out the reaction S-sulfanyl-L-cysteinyl-[protein] + uridine(34) in tRNA + AH2 + ATP = 2-thiouridine(34) in tRNA + L-cysteinyl-[protein] + A + AMP + diphosphate + H(+). In terms of biological role, catalyzes the 2-thiolation of uridine at the wobble position (U34) of tRNA, leading to the formation of s(2)U34. The chain is tRNA-specific 2-thiouridylase MnmA from Parabacteroides distasonis (strain ATCC 8503 / DSM 20701 / CIP 104284 / JCM 5825 / NCTC 11152).